The following is a 233-amino-acid chain: Type IV secretion system protein PtlE homolog (233 aa).

A helical transmembrane segment spans residues 42 to 62 (VAWAALAVTALSLIAIATMLP).

It belongs to the virB8 family.

The protein localises to the cell inner membrane. The sequence is that of Type IV secretion system protein PtlE homolog (ptlE) from Bordetella bronchiseptica (strain ATCC BAA-588 / NCTC 13252 / RB50) (Alcaligenes bronchisepticus).